A 261-amino-acid polypeptide reads, in one-letter code: Protein TfpB (261 aa).

This is Protein TfpB (tfpB) from Moraxella bovis.